The sequence spans 141 residues: Probable trafficking protein particle complex subunit 2 (141 aa).

Belongs to the TRAPP small subunits family. Sedlin subfamily. In terms of assembly, part of the multisubunit TRAPP (transport protein particle) complex.

Its subcellular location is the cytoplasm. The protein localises to the perinuclear region. It localises to the endoplasmic reticulum. It is found in the golgi apparatus. Functionally, may play a role in vesicular transport from endoplasmic reticulum to Golgi. Required for the systemic spread of the RNAi response. This Caenorhabditis elegans protein is Probable trafficking protein particle complex subunit 2 (sedl-1).